The chain runs to 252 residues: Imidazole glycerol phosphate synthase subunit HisF (252 aa).

Residues Asp11 and Asp130 contribute to the active site.

It belongs to the HisA/HisF family. As to quaternary structure, heterodimer of HisH and HisF.

The protein localises to the cytoplasm. It carries out the reaction 5-[(5-phospho-1-deoxy-D-ribulos-1-ylimino)methylamino]-1-(5-phospho-beta-D-ribosyl)imidazole-4-carboxamide + L-glutamine = D-erythro-1-(imidazol-4-yl)glycerol 3-phosphate + 5-amino-1-(5-phospho-beta-D-ribosyl)imidazole-4-carboxamide + L-glutamate + H(+). It participates in amino-acid biosynthesis; L-histidine biosynthesis; L-histidine from 5-phospho-alpha-D-ribose 1-diphosphate: step 5/9. Functionally, IGPS catalyzes the conversion of PRFAR and glutamine to IGP, AICAR and glutamate. The HisF subunit catalyzes the cyclization activity that produces IGP and AICAR from PRFAR using the ammonia provided by the HisH subunit. The polypeptide is Imidazole glycerol phosphate synthase subunit HisF (Geobacillus sp. (strain WCH70)).